A 458-amino-acid chain; its full sequence is Probable beta-eliminating lyase (458 aa).

Lysine 257 bears the N6-(pyridoxal phosphate)lysine mark.

Belongs to the beta-eliminating lyase family. Pyridoxal 5'-phosphate serves as cofactor.

The polypeptide is Probable beta-eliminating lyase (Trichomonas vaginalis (strain ATCC PRA-98 / G3)).